Reading from the N-terminus, the 186-residue chain is Ribosome-recycling factor (186 aa).

The tract at residues 135-162 (DGMDGLKKAEKDGDIGQDESRAQSERVQ) is disordered.

It belongs to the RRF family.

The protein localises to the cytoplasm. Responsible for the release of ribosomes from messenger RNA at the termination of protein biosynthesis. May increase the efficiency of translation by recycling ribosomes from one round of translation to another. The polypeptide is Ribosome-recycling factor (Sinorhizobium fredii (strain NBRC 101917 / NGR234)).